A 503-amino-acid polypeptide reads, in one-letter code: Probable DNA ligase (503 aa).

Residue Glu-210 coordinates ATP. The active-site N6-AMP-lysine intermediate is the Lys-212. ATP-binding residues include Arg-217, Arg-232, Glu-261, Phe-296, Arg-367, and Lys-373.

It belongs to the ATP-dependent DNA ligase family. It depends on Mg(2+) as a cofactor.

The enzyme catalyses ATP + (deoxyribonucleotide)n-3'-hydroxyl + 5'-phospho-(deoxyribonucleotide)m = (deoxyribonucleotide)n+m + AMP + diphosphate.. DNA ligase that seals nicks in double-stranded DNA during DNA replication, DNA recombination and DNA repair. The protein is Probable DNA ligase of Rhodococcus jostii (strain RHA1).